We begin with the raw amino-acid sequence, 169 residues long: Shikimate kinase (169 aa).

Residue glycine 12 to threonine 17 coordinates ATP. Serine 16 lines the Mg(2+) pocket. Residues aspartate 34, arginine 57, and glycine 79 each contribute to the substrate site. Arginine 116 lines the ATP pocket. Substrate is bound at residue arginine 133.

Belongs to the shikimate kinase family. In terms of assembly, monomer. Mg(2+) is required as a cofactor.

It is found in the cytoplasm. It catalyses the reaction shikimate + ATP = 3-phosphoshikimate + ADP + H(+). It functions in the pathway metabolic intermediate biosynthesis; chorismate biosynthesis; chorismate from D-erythrose 4-phosphate and phosphoenolpyruvate: step 5/7. Catalyzes the specific phosphorylation of the 3-hydroxyl group of shikimic acid using ATP as a cosubstrate. The polypeptide is Shikimate kinase (Clostridium beijerinckii (strain ATCC 51743 / NCIMB 8052) (Clostridium acetobutylicum)).